A 397-amino-acid chain; its full sequence is Chorismate synthase (397 aa).

The NADP(+) site is built by Arg-40 and Arg-46. Residues Arg-129–Ser-131, Gln-257–Ala-258, Gly-302, Lys-317–Ser-321, and Arg-343 each bind FMN.

This sequence belongs to the chorismate synthase family. Homotetramer. FMNH2 is required as a cofactor.

The enzyme catalyses 5-O-(1-carboxyvinyl)-3-phosphoshikimate = chorismate + phosphate. It participates in metabolic intermediate biosynthesis; chorismate biosynthesis; chorismate from D-erythrose 4-phosphate and phosphoenolpyruvate: step 7/7. Its function is as follows. Catalyzes the anti-1,4-elimination of the C-3 phosphate and the C-6 proR hydrogen from 5-enolpyruvylshikimate-3-phosphate (EPSP) to yield chorismate, which is the branch point compound that serves as the starting substrate for the three terminal pathways of aromatic amino acid biosynthesis. This reaction introduces a second double bond into the aromatic ring system. The polypeptide is Chorismate synthase (Chlorobaculum tepidum (strain ATCC 49652 / DSM 12025 / NBRC 103806 / TLS) (Chlorobium tepidum)).